Consider the following 201-residue polypeptide: dTTP/UTP pyrophosphatase (201 aa).

The active-site Proton acceptor is the aspartate 81.

This sequence belongs to the Maf family. YhdE subfamily. The cofactor is a divalent metal cation.

The protein resides in the cytoplasm. The catalysed reaction is dTTP + H2O = dTMP + diphosphate + H(+). It catalyses the reaction UTP + H2O = UMP + diphosphate + H(+). Its function is as follows. Nucleoside triphosphate pyrophosphatase that hydrolyzes dTTP and UTP. May have a dual role in cell division arrest and in preventing the incorporation of modified nucleotides into cellular nucleic acids. This Bordetella avium (strain 197N) protein is dTTP/UTP pyrophosphatase.